A 410-amino-acid polypeptide reads, in one-letter code: D-amino acid dehydrogenase (410 aa).

9 to 14 (GGGIVG) contributes to the FAD binding site.

The protein belongs to the DadA oxidoreductase family. It depends on FAD as a cofactor.

The protein localises to the cell inner membrane. It carries out the reaction a D-alpha-amino acid + a quinone + H2O = a 2-oxocarboxylate + a quinol + NH4(+). In terms of biological role, catalyzes the oxidative deamination of D-amino acids. Has broad substrate specificity; is mostly active on D-proline, and to a lesser extent, on several other D-amino acids such as D-alanine, D-phenylalanine and D-serine. Mediates electron transport from D-proline to coenzyme Q1 in vitro, and is involved in the electron transport chain from D-proline to the c-type cytochrome in vivo. This is D-amino acid dehydrogenase from Helicobacter pylori (strain J99 / ATCC 700824) (Campylobacter pylori J99).